Consider the following 256-residue polypeptide: Type III pantothenate kinase (256 aa).

7 to 14 (DVGNTRLK) contributes to the ATP binding site. Residues tyrosine 96 and 103–106 (GADR) each bind substrate. Residue aspartate 105 is the Proton acceptor of the active site. Residue threonine 133 coordinates ATP. Threonine 183 serves as a coordination point for substrate.

The protein belongs to the type III pantothenate kinase family. As to quaternary structure, homodimer. NH4(+) is required as a cofactor. K(+) serves as cofactor.

It localises to the cytoplasm. It catalyses the reaction (R)-pantothenate + ATP = (R)-4'-phosphopantothenate + ADP + H(+). The protein operates within cofactor biosynthesis; coenzyme A biosynthesis; CoA from (R)-pantothenate: step 1/5. In terms of biological role, catalyzes the phosphorylation of pantothenate (Pan), the first step in CoA biosynthesis. The sequence is that of Type III pantothenate kinase from Verminephrobacter eiseniae (strain EF01-2).